Here is a 165-residue protein sequence, read N- to C-terminus: Peptide methionine sulfoxide reductase MsrA (165 aa).

The active site involves cysteine 10.

The protein belongs to the MsrA Met sulfoxide reductase family.

The catalysed reaction is L-methionyl-[protein] + [thioredoxin]-disulfide + H2O = L-methionyl-(S)-S-oxide-[protein] + [thioredoxin]-dithiol. It carries out the reaction [thioredoxin]-disulfide + L-methionine + H2O = L-methionine (S)-S-oxide + [thioredoxin]-dithiol. Functionally, has an important function as a repair enzyme for proteins that have been inactivated by oxidation. Catalyzes the reversible oxidation-reduction of methionine sulfoxide in proteins to methionine. In Campylobacter jejuni subsp. jejuni serotype O:23/36 (strain 81-176), this protein is Peptide methionine sulfoxide reductase MsrA.